We begin with the raw amino-acid sequence, 450 residues long: MRLATEPASLPSGLPEPRRVAVLSVHTSPLAQPGTGDAGGMNVYVLQTALELANRGVDVEIFTRATSSADQPVVPVAPGVLVRNVVAGPFEGLDKNDLPTQLCAFTAGVLRAEATHEPGYYDIVHSHYWLSGQVGWLAADRWAVPLVHTAHTLAAVKNASLAAGDAPEPPMRSIGEQQVVDAADRLIVNTEHEAQQLVSLHQADPARIDVVHPGVDLATFTPGDRLAARAALGLDANSRIVAFVGRIQPLKAPDVLLRAAALLPDVQVLIAGGPSGSGLISRPGAGGLATPDNLVNLAAELGMTDRVTFLPPQSRDNLVQVYRAADVVAVPSYSESFGLVAVEAQACGTPVVAAAVGGLPVAVRDGVSGALVDGHDPGDWAGTLADVLAADPATLSRAAVDHAATFSWSHTVDALLAGYGRAIADHRARHQGQLARRSGRRFSMRRGVRA.

Residue H26 participates in 1D-myo-inositol 3-phosphate binding. UDP-N-acetyl-alpha-D-glucosamine contacts are provided by residues 32–33 and G40; that span reads QP. Residues 37 to 42, K95, Y128, T152, and R172 contribute to the 1D-myo-inositol 3-phosphate site; that span reads DAGGMN. R246, K251, and Q313 together coordinate UDP-N-acetyl-alpha-D-glucosamine. Mg(2+) is bound by residues Y322, R323, and A325. E335 and E343 together coordinate UDP-N-acetyl-alpha-D-glucosamine. Residue T349 coordinates Mg(2+).

Belongs to the glycosyltransferase group 1 family. MshA subfamily. In terms of assembly, homodimer.

It carries out the reaction 1D-myo-inositol 3-phosphate + UDP-N-acetyl-alpha-D-glucosamine = 1D-myo-inositol 2-acetamido-2-deoxy-alpha-D-glucopyranoside 3-phosphate + UDP + H(+). Functionally, catalyzes the transfer of a N-acetyl-glucosamine moiety to 1D-myo-inositol 3-phosphate to produce 1D-myo-inositol 2-acetamido-2-deoxy-glucopyranoside 3-phosphate in the mycothiol biosynthesis pathway. This chain is D-inositol 3-phosphate glycosyltransferase, found in Mycolicibacterium vanbaalenii (strain DSM 7251 / JCM 13017 / BCRC 16820 / KCTC 9966 / NRRL B-24157 / PYR-1) (Mycobacterium vanbaalenii).